Reading from the N-terminus, the 136-residue chain is 5-hydroxyisourate hydrolase (136 aa).

The first 22 residues, 1–22, serve as a signal peptide directing secretion; the sequence is MKRHILATVIASLVAAPAMALA. The substrate site is built by H31, R69, and Y133.

This sequence belongs to the transthyretin family. 5-hydroxyisourate hydrolase subfamily. In terms of assembly, homotetramer.

It localises to the periplasm. The enzyme catalyses 5-hydroxyisourate + H2O = 5-hydroxy-2-oxo-4-ureido-2,5-dihydro-1H-imidazole-5-carboxylate + H(+). Catalyzes the hydrolysis of 5-hydroxyisourate (HIU) to 2-oxo-4-hydroxy-4-carboxy-5-ureidoimidazoline (OHCU). This chain is 5-hydroxyisourate hydrolase (hiuH), found in Salmonella dublin.